Consider the following 184-residue polypeptide: Large ribosomal subunit protein uL15 (184 aa).

Residues 1-62 form a disordered region; that stretch reads MDLSSLRPAK…QMPMYRRLPK (62 aa). The span at 21–35 shows a compositional bias: gly residues; it reads RGPGSGNGTTAGKGN.

The protein belongs to the universal ribosomal protein uL15 family. Part of the 50S ribosomal subunit.

Its function is as follows. Binds to the 23S rRNA. The protein is Large ribosomal subunit protein uL15 of Chlorobaculum parvum (strain DSM 263 / NCIMB 8327) (Chlorobium vibrioforme subsp. thiosulfatophilum).